The primary structure comprises 576 residues: SNF1-like protein kinase ssp2 (576 aa).

Residues 34 to 285 (YIIRETLGEG…IQEIRRDPWF (252 aa)) enclose the Protein kinase domain. Residues 40–48 (LGEGSFGKV) and K63 contribute to the ATP site. D156 serves as the catalytic Proton acceptor. Residue T189 is modified to Phosphothreonine. The segment at 292–348 (YLRPMEEVQGSYADSRIVSKLGEAMGFSEDYIVEALRSDENNEVKEAYNLLHENQVI) is auto-inhibitory domain (AID). The region spanning 304–345 (ADSRIVSKLGEAMGFSEDYIVEALRSDENNEVKEAYNLLHEN) is the UBA domain. S442 is subject to Phosphoserine.

The protein belongs to the protein kinase superfamily. CAMK Ser/Thr protein kinase family. SNF1 subfamily. In terms of assembly, component of the AMP-activated protein kinase complex also known as the SNF1 kinase complex (Snf1c), a heterotrimeric complex composed of a catalytic subunit alpha and 2 regulatory subunits beta (amk2) and gamma (cbs2). In terms of processing, phosphorylation at Thr-189 by ssp1 is required for nuclear entry in nutritionally stressed cells.

Its subcellular location is the cytoplasm. The protein resides in the nucleus. It carries out the reaction L-seryl-[protein] + ATP = O-phospho-L-seryl-[protein] + ADP + H(+). It catalyses the reaction L-threonyl-[protein] + ATP = O-phospho-L-threonyl-[protein] + ADP + H(+). Serine/threonine protein kinase essential for release from glucose repression via the phosphorylation of scr1 upon glucose deprivation. Catalytic subunit of the AMP-activated protein kinase complex also known as the SNF1 kinase complex (Snf1c), a central regulator of cellular energy homeostasis, which, in response to a fall in intracellular ATP levels, activates energy-producing pathways and inhibits energy-consuming processes. The complex phosphorylates histone H3 to form H3S10ph, which promotes H3K14ac formation, leading to transcriptional activation through TBP recruitment to the promoters. Regulates proper cell cycle exit and sexual differentiation. Also regulates ste11 levels under nitrogen deprivation. In Schizosaccharomyces pombe (strain 972 / ATCC 24843) (Fission yeast), this protein is SNF1-like protein kinase ssp2.